A 201-amino-acid chain; its full sequence is Small ribosomal subunit protein uS4 (201 aa).

The region spanning 91–151 (SRLDNVVYRA…EKSRSMLWFE (61 aa)) is the S4 RNA-binding domain.

This sequence belongs to the universal ribosomal protein uS4 family. As to quaternary structure, part of the 30S ribosomal subunit. Contacts protein S5. The interaction surface between S4 and S5 is involved in control of translational fidelity.

Its function is as follows. One of the primary rRNA binding proteins, it binds directly to 16S rRNA where it nucleates assembly of the body of the 30S subunit. In terms of biological role, with S5 and S12 plays an important role in translational accuracy. This Corynebacterium jeikeium (strain K411) protein is Small ribosomal subunit protein uS4.